The sequence spans 629 residues: Dihydroxy-acid dehydratase 2 (629 aa).

Asp-82 provides a ligand contact to Mg(2+). Cys-123 provides a ligand contact to [2Fe-2S] cluster. Mg(2+) is bound by residues Asp-124 and Lys-125. Lys-125 is subject to N6-carboxylysine. Cys-197 provides a ligand contact to [2Fe-2S] cluster. Residue Glu-493 participates in Mg(2+) binding. The active-site Proton acceptor is the Ser-519. The tract at residues 603–629 (DKGGVRRLPPDELGGPEAAFDTQTRAG) is disordered.

This sequence belongs to the IlvD/Edd family. As to quaternary structure, homodimer. [2Fe-2S] cluster serves as cofactor. The cofactor is Mg(2+).

The catalysed reaction is (2R)-2,3-dihydroxy-3-methylbutanoate = 3-methyl-2-oxobutanoate + H2O. It catalyses the reaction (2R,3R)-2,3-dihydroxy-3-methylpentanoate = (S)-3-methyl-2-oxopentanoate + H2O. It participates in amino-acid biosynthesis; L-isoleucine biosynthesis; L-isoleucine from 2-oxobutanoate: step 3/4. It functions in the pathway amino-acid biosynthesis; L-valine biosynthesis; L-valine from pyruvate: step 3/4. Functions in the biosynthesis of branched-chain amino acids. Catalyzes the dehydration of (2R,3R)-2,3-dihydroxy-3-methylpentanoate (2,3-dihydroxy-3-methylvalerate) into 2-oxo-3-methylpentanoate (2-oxo-3-methylvalerate) and of (2R)-2,3-dihydroxy-3-methylbutanoate (2,3-dihydroxyisovalerate) into 2-oxo-3-methylbutanoate (2-oxoisovalerate), the penultimate precursor to L-isoleucine and L-valine, respectively. This is Dihydroxy-acid dehydratase 2 from Nocardia farcinica (strain IFM 10152).